The sequence spans 186 residues: Ribosome-recycling factor (186 aa).

Positions 144–163 are disordered; sequence EKDGVIGQDESRAQSERVQK.

The protein belongs to the RRF family.

Its subcellular location is the cytoplasm. In terms of biological role, responsible for the release of ribosomes from messenger RNA at the termination of protein biosynthesis. May increase the efficiency of translation by recycling ribosomes from one round of translation to another. In Rhizobium johnstonii (strain DSM 114642 / LMG 32736 / 3841) (Rhizobium leguminosarum bv. viciae), this protein is Ribosome-recycling factor.